A 154-amino-acid polypeptide reads, in one-letter code: UPF0225 protein YPTB2098 (154 aa).

This sequence belongs to the UPF0225 family.

This chain is UPF0225 protein YPTB2098, found in Yersinia pseudotuberculosis serotype I (strain IP32953).